Reading from the N-terminus, the 143-residue chain is Large ribosomal subunit protein uL11 (143 aa).

This sequence belongs to the universal ribosomal protein uL11 family. In terms of assembly, part of the ribosomal stalk of the 50S ribosomal subunit. Interacts with L10 and the large rRNA to form the base of the stalk. L10 forms an elongated spine to which L12 dimers bind in a sequential fashion forming a multimeric L10(L12)X complex. One or more lysine residues are methylated.

In terms of biological role, forms part of the ribosomal stalk which helps the ribosome interact with GTP-bound translation factors. This Kocuria rhizophila (strain ATCC 9341 / DSM 348 / NBRC 103217 / DC2201) protein is Large ribosomal subunit protein uL11.